A 482-amino-acid chain; its full sequence is Nicotine dehydrogenase (482 aa).

The tat-type signal signal peptide spans 1–38; sequence MSDKTKTNEGFSRRSFIGSAAVVTAGVAGLGAIDAASA. Positions 64, 83, 84, 85, 91, 108, and 279 each coordinate FAD. Residue Thr381 coordinates (S)-nicotine. Ala453, Asn462, and Ile463 together coordinate FAD.

It belongs to the flavin monoamine oxidase family. Monomer in solution. Homodimer in solution. Forms homodimers in the crystal. The cofactor is FAD. In terms of processing, predicted to be exported by the Tat system. The position of the signal peptide cleavage has not been experimentally proven.

The protein resides in the periplasm. The catalysed reaction is (S)-nicotine + 2 Fe(III)-[cytochrome c] = N-methylmyosmine + 2 Fe(II)-[cytochrome c] + 2 H(+). It functions in the pathway alkaloid degradation; nicotine degradation. Its activity is regulated as follows. The catalytic rate is not significantly affected by pH. Involved in nicotine degradation. Catalyzes the conversion of nicotine to N-methylmyosmine. N-methylmyosmine undergoes spontaneous hydrolysis to form pseudooxynicotine (PN). S-nicotine is the optimal substrate. Has lower activity with some nicotine analogs, but shows no activity towards neurotransmitters, including serotonin, dopamine, and norepinephrine, nicotine metabolites and common neuroactive drugs. The enzyme is stereospecific with poor activity with (R)-nicotine as the substrate. The c-type cytochrome protein CycN is the physiological electron acceptor. O(2) is a poor electron acceptor. The protein is Nicotine dehydrogenase of Pseudomonas putida (strain DSM 28022 / S16).